Reading from the N-terminus, the 108-residue chain is Iron-sulfur cluster assembly protein CyaY (108 aa).

The protein belongs to the frataxin family.

Its function is as follows. Involved in iron-sulfur (Fe-S) cluster assembly. May act as a regulator of Fe-S biogenesis. This Burkholderia vietnamiensis (strain G4 / LMG 22486) (Burkholderia cepacia (strain R1808)) protein is Iron-sulfur cluster assembly protein CyaY.